Reading from the N-terminus, the 416-residue chain is CC-adding tRNA nucleotidyltransferase (416 aa).

31-34 is a CTP binding site; that stretch reads GAVR. Mg(2+)-binding residues include Asp-46 and Asp-48. Residues 106-107, Asn-111, 148-157, and Arg-188 each bind CTP; these read RD and DPLRLLRAYR.

It belongs to the tRNA nucleotidyltransferase/poly(A) polymerase family. The cofactor is Mg(2+).

It catalyses the reaction a tRNA precursor + 2 CTP = a tRNA with a 3' CC end + 2 diphosphate. Its function is as follows. tRNA nucleotidyltransferase involved in the synthesis of the tRNA CCA terminus. Adds the two cytidine residues to tRNA. The polypeptide is CC-adding tRNA nucleotidyltransferase (Synechocystis sp. (strain ATCC 27184 / PCC 6803 / Kazusa)).